The sequence spans 1097 residues: Translation initiation factor IF-2 (1097 aa).

Positions 79–458 (LEKRVSPQAD…RVIKKKPKKA (380 aa)) are disordered. Residues 97-112 (AKKEASQEKADAHAKL) are compositionally biased toward basic and acidic residues. Residues 157–173 (AATLAVEEAPIAAAPTE) are compositionally biased toward low complexity. 2 stretches are compositionally biased toward basic and acidic residues: residues 174–190 (EPMH…KIDS) and 202–221 (VEVH…HAEE). A compositionally biased stretch (low complexity) spans 224–236 (TPTTEASSEETSA). Residues 258-267 (RKTQNTTNVS) are compositionally biased toward polar residues. The segment covering 268–286 (EENKQHEKQPETLKSDKAM) has biased composition (basic and acidic residues). Over residues 340–363 (SDSLQAEISRQQNEISNRFSQSEN) the composition is skewed to polar residues. The segment covering 376–385 (HKKKRKRKKN) has biased composition (basic residues). A compositionally biased stretch (basic and acidic residues) spans 402-443 (PKQEEKPVKKEKPKEREKPAAGKKEQTPGKKPVREDQKERVL). The tr-type G domain maps to 591-761 (TRPPVVTIMG…LVEAELLELK (171 aa)). The G1 stretch occupies residues 600–607 (GHVDHGKT). Position 600 to 607 (600 to 607 (GHVDHGKT)) interacts with GTP. A G2 region spans residues 625–629 (GITQH). The G3 stretch occupies residues 647–650 (DTPG). Residues 647–651 (DTPGH) and 701–704 (NKID) each bind GTP. Residues 701–704 (NKID) form a G4 region. The G5 stretch occupies residues 737 to 739 (SAK).

Belongs to the TRAFAC class translation factor GTPase superfamily. Classic translation factor GTPase family. IF-2 subfamily.

The protein resides in the cytoplasm. In terms of biological role, one of the essential components for the initiation of protein synthesis. Protects formylmethionyl-tRNA from spontaneous hydrolysis and promotes its binding to the 30S ribosomal subunits. Also involved in the hydrolysis of GTP during the formation of the 70S ribosomal complex. The polypeptide is Translation initiation factor IF-2 (Chloroherpeton thalassium (strain ATCC 35110 / GB-78)).